A 324-amino-acid chain; its full sequence is Zinc finger C2HC domain-containing protein 1A (324 aa).

The segment at 15–44 (DLLPCKICGRTFFPLALKKHGPICQKTATK) adopts a C2HC/C3H-type 1 zinc-finger fold. Residues Cys-19, Cys-22, His-34, and Cys-38 each coordinate Zn(2+). Residues 43–83 (TKKRKTFDSSRQRAEGTDIPTVKPLKPRPEPPKKPSNWRRK) form a disordered region. A compositionally biased stretch (basic and acidic residues) spans 48–58 (TFDSSRQRAEG). The C2HC/C3H-type 2 zinc finger occupies 118-147 (DYIQCPYCQRRFNENAADRHINFCKEQAAR). Cys-122, Cys-125, His-137, and Cys-141 together coordinate Zn(2+). The tract at residues 149-225 (SNKGKFSTDS…NKPQTLSPSH (77 aa)) is disordered. The span at 176-187 (SNPPGIPSSGSS) shows a compositional bias: low complexity. Composition is skewed to polar residues over residues 188-198 (RLPQPSTTSKT) and 206-223 (KASS…TLSP). Position 222 is a phosphoserine (Ser-222). Thr-243 carries the post-translational modification Phosphothreonine. Residue Ser-291 is modified to Phosphoserine.

This sequence belongs to the ZC2HC1 family. The cofactor is Zn(2+).

The protein is Zinc finger C2HC domain-containing protein 1A (Zc2hc1a) of Mus musculus (Mouse).